Consider the following 366-residue polypeptide: Mannonate dehydratase (366 aa).

The protein belongs to the mannonate dehydratase family. Fe(2+) is required as a cofactor. Requires Mn(2+) as cofactor.

The catalysed reaction is D-mannonate = 2-dehydro-3-deoxy-D-gluconate + H2O. The protein operates within carbohydrate metabolism; pentose and glucuronate interconversion. Its function is as follows. Catalyzes the dehydration of D-mannonate. The protein is Mannonate dehydratase of Streptococcus pneumoniae (strain 70585).